Here is a 224-residue protein sequence, read N- to C-terminus: MMTNLFSVFDPSAIFNLSLNWLSTFLGLLMIPSIYWLMPSRYNIVWNSILLTLHKEFKTLLGPSGHNGSTFIFISLFSLILFNNFMGLFPYIFTSTSHLTLTLSLALPLWLCFMLYGWINHTQHMFAHLVPQGTPAVLMPFMVCIETISNIIRPGTLAVRLTANMIAGHLLLTLLGNTGPSMSYLLVTFLLTAQIALLVLESAVAMIQSYVFAVLSTLYSSEVN.

The next 6 helical transmembrane spans lie at 17 to 37, 72 to 92, 99 to 119, 125 to 145, 170 to 190, and 195 to 215; these read LSLNWLSTFLGLLMIPSIYWL, IFISLFSLILFNNFMGLFPYI, LTLTLSLALPLWLCFMLYGWI, MFAHLVPQGTPAVLMPFMVCI, LLLTLLGNTGPSMSYLLVTFL, and IALLVLESAVAMIQSYVFAVL.

It belongs to the ATPase A chain family. F-type ATPases have 2 components, CF(1) - the catalytic core - and CF(0) - the membrane proton channel. CF(1) has five subunits: alpha(3), beta(3), gamma(1), delta(1), epsilon(1). CF(0) has three main subunits: a, b and c.

The protein localises to the mitochondrion inner membrane. Mitochondrial membrane ATP synthase (F(1)F(0) ATP synthase or Complex V) produces ATP from ADP in the presence of a proton gradient across the membrane which is generated by electron transport complexes of the respiratory chain. F-type ATPases consist of two structural domains, F(1) - containing the extramembraneous catalytic core and F(0) - containing the membrane proton channel, linked together by a central stalk and a peripheral stalk. During catalysis, ATP synthesis in the catalytic domain of F(1) is coupled via a rotary mechanism of the central stalk subunits to proton translocation. Key component of the proton channel; it may play a direct role in the translocation of protons across the membrane. The polypeptide is ATP synthase subunit a (mt:ATPase6) (Drosophila mauritiana (Fruit fly)).